The following is a 537-amino-acid chain: Membrane protein insertase YidC (537 aa).

The next 5 membrane-spanning stretches (helical) occupy residues 6-26, 341-363, 411-431, 449-469, and 490-510; these read SLLA…WEID, LVSN…LYPL, LGGC…YWTF, LSAQ…MFLL, and PVIF…YWLV.

The protein belongs to the OXA1/ALB3/YidC family. Type 1 subfamily. As to quaternary structure, interacts with the Sec translocase complex via SecD. Specifically interacts with transmembrane segments of nascent integral membrane proteins during membrane integration.

The protein resides in the cell inner membrane. Its function is as follows. Required for the insertion and/or proper folding and/or complex formation of integral membrane proteins into the membrane. Involved in integration of membrane proteins that insert both dependently and independently of the Sec translocase complex, as well as at least some lipoproteins. Aids folding of multispanning membrane proteins. The polypeptide is Membrane protein insertase YidC (Actinobacillus succinogenes (strain ATCC 55618 / DSM 22257 / CCUG 43843 / 130Z)).